The chain runs to 312 residues: Transcription initiation factor IIB 1 (312 aa).

The segment at 12 to 43 adopts a TFIIB-type zinc-finger fold; the sequence is EIERCPECGSTNLIRDYEHGELVCGECGAVIE. C16, C19, C35, and C38 together coordinate Zn(2+). 2 consecutive repeat copies span residues 129 to 212 and 223 to 304.

The protein belongs to the TFIIB family.

Stabilizes TBP binding to an archaeal box-A promoter. Also responsible for recruiting RNA polymerase II to the pre-initiation complex (DNA-TBP-TFIIB). The protein is Transcription initiation factor IIB 1 of Thermoplasma volcanium (strain ATCC 51530 / DSM 4299 / JCM 9571 / NBRC 15438 / GSS1).